The sequence spans 235 residues: Carbonic anhydrase 1 (235 aa).

In terms of domain architecture, Alpha-carbonic anhydrase spans 1 to 235 (GNKQSPVDIK…LKGRTVKASF (235 aa)). Histidine 40 acts as the Proton donor/acceptor in catalysis. Zn(2+) contacts are provided by histidine 69, histidine 71, and histidine 94. Residues threonine 174 and 174-175 (TH) contribute to the substrate site.

This sequence belongs to the alpha-carbonic anhydrase family. Requires Zn(2+) as cofactor.

The protein resides in the cytoplasm. The catalysed reaction is hydrogencarbonate + H(+) = CO2 + H2O. The enzyme catalyses urea = cyanamide + H2O. Its activity is regulated as follows. Inhibited by acetazolamide. Its function is as follows. Catalyzes the reversible hydration of carbon dioxide. Can hydrate cyanamide to urea. The chain is Carbonic anhydrase 1 (CA1) from Oryctolagus cuniculus (Rabbit).